The sequence spans 514 residues: 2,3-bisphosphoglycerate-independent phosphoglycerate mutase (514 aa).

Residues Asp-15 and Ser-65 each contribute to the Mn(2+) site. Ser-65 acts as the Phosphoserine intermediate in catalysis. Substrate contacts are provided by residues His-126, Arg-156 to Asp-157, Arg-188, Arg-194, Arg-261 to Arg-264, and Lys-335. Mn(2+) contacts are provided by Asp-403, His-407, Asp-444, His-445, and His-462.

It belongs to the BPG-independent phosphoglycerate mutase family. Monomer. Requires Mn(2+) as cofactor.

It carries out the reaction (2R)-2-phosphoglycerate = (2R)-3-phosphoglycerate. It participates in carbohydrate degradation; glycolysis; pyruvate from D-glyceraldehyde 3-phosphate: step 3/5. Functionally, catalyzes the interconversion of 2-phosphoglycerate and 3-phosphoglycerate. The protein is 2,3-bisphosphoglycerate-independent phosphoglycerate mutase of Syntrophotalea carbinolica (strain DSM 2380 / NBRC 103641 / GraBd1) (Pelobacter carbinolicus).